The primary structure comprises 428 residues: Immunoglobulin superfamily member 11 (428 aa).

The N-terminal stretch at 1–22 (MTRRRSAPASWLLVSLLGVATS) is a signal peptide. An Ig-like V-type domain is found at 23–136 (LEVSESPGSV…DRGGRNIGVT (114 aa)). At 23–240 (LEVSESPGSV…QVISPQPRSV (218 aa)) the chain is on the extracellular side. 2 disulfide bridges follow: Cys44-Cys120 and Cys165-Cys215. An N-linked (GlcNAc...) asparagine glycan is attached at Asn102. The region spanning 144 to 234 (PSAPQCQIQG…TCLLDLQVIS (91 aa)) is the Ig-like C2-type domain. The helical transmembrane segment at 241–261 (GVIAGAVGTGAVLIVICLALI) threads the bilayer. Residues 262-428 (SGAFFYWRSK…PAQSRAGSLV (167 aa)) lie on the Cytoplasmic side of the membrane. At Arg375 the chain carries Omega-N-methylarginine. Residues 376 to 389 (GSSPQVLPRNNGSV) show a composition bias toward polar residues. The segment at 376 to 396 (GSSPQVLPRNNGSVSRKPWPQ) is disordered.

N-glycosylated. As to expression, highly expressed in testis and detected in kidney and adrenal gland. In brain, expressed in commissure fibers of the corpus callosum and pyramidal cell layers of the dentate gyrus and hippocampus where it is probably expressed by both neurons and glial cells.

Its subcellular location is the cell membrane. In terms of biological role, functions as a cell adhesion molecule through homophilic interaction. Stimulates cell growth. The sequence is that of Immunoglobulin superfamily member 11 (Igsf11) from Mus musculus (Mouse).